Reading from the N-terminus, the 513-residue chain is Serine/threonine protein phosphatase 2A 55 kDa regulatory subunit B alpha isoform (513 aa).

The residue at position 1 (Met-1) is an N-acetylmethionine. WD repeat units lie at residues 36 to 75 (QEVDIISAIEFDNSGNHLATGDRGGRVVLFERTDTNNSSG), 112 to 153 (EIEE…IKKI), 232 to 270 (AHDYHINSISNNSDGETFISADDLRINLWNLEISNQSFN), 281 to 321 (DLSE…LCDS), 340 to 378 (EIIASVSDIKFAKEGRYLLSRDYMTLKLWDINMDAGPVA), and 483 to 513 (DYTTKLLHLAWHPNENSIACAAANSLYMYYA).

It belongs to the phosphatase 2A regulatory subunit B family. As to quaternary structure, PP2A consists of a common heteromeric enzyme, composed of a catalytic subunit (subunits C), a constant regulatory subunit (subunit A), and a variety of regulatory subunits such as subunits B (the R2/B/PR55/B55, R3/B''/PR72/PR130/PR59 and R5/B'/B56 families). Interacts with SIC/RON3. Expressed ubiquitously.

Functionally, the B regulatory subunit may modulate substrate selectivity and catalytic activity, and may also direct the localization of the catalytic enzyme to a particular subcellular compartment. The chain is Serine/threonine protein phosphatase 2A 55 kDa regulatory subunit B alpha isoform (PP2AB1) from Arabidopsis thaliana (Mouse-ear cress).